An 88-amino-acid polypeptide reads, in one-letter code: Small ribosomal subunit protein bS20 (88 aa).

Residues 1-26 (MANTAQARKRARQNTKRRQNSASQRS) form a disordered region. Residues 7–19 (ARKRARQNTKRRQ) show a composition bias toward basic residues.

Belongs to the bacterial ribosomal protein bS20 family.

Functionally, binds directly to 16S ribosomal RNA. The polypeptide is Small ribosomal subunit protein bS20 (Psychrobacter cryohalolentis (strain ATCC BAA-1226 / DSM 17306 / VKM B-2378 / K5)).